A 316-amino-acid polypeptide reads, in one-letter code: MKVLLANPRGFCAGVDRAIEIVKRTIDMLGTPIYVRHEVVHNRFVVDDLKQRGAIFVEELHQVPDGATVIFSAHGVSQAVRRQAAQRGLKVFDATCPLVTKVHLDVARHCRTGRDMILIGHAGHPEVEGTMGQWDQERGTGRIYLVENIDDVAALHVAQPHHLAYTTQTTLSVDDTRNIIDALRQRFPTIQGPKNNDICYATQNRQDAVRELARECDLVLVVGSPNSSNSNRLSELAQREGVASYLIDSAAEIDPAWVIDKHHIGVTAGASAPQVLVDGVLARLYELGATSVSEHSGKPESMVFALPKALRLQLVD.

C12 lines the [4Fe-4S] cluster pocket. Residues H41 and H74 each contribute to the (2E)-4-hydroxy-3-methylbut-2-enyl diphosphate site. H41 and H74 together coordinate dimethylallyl diphosphate. The isopentenyl diphosphate site is built by H41 and H74. A [4Fe-4S] cluster-binding site is contributed by C96. (2E)-4-hydroxy-3-methylbut-2-enyl diphosphate is bound at residue H124. Residue H124 coordinates dimethylallyl diphosphate. H124 contacts isopentenyl diphosphate. Residue E126 is the Proton donor of the active site. T169 contacts (2E)-4-hydroxy-3-methylbut-2-enyl diphosphate. C199 lines the [4Fe-4S] cluster pocket. (2E)-4-hydroxy-3-methylbut-2-enyl diphosphate-binding residues include S227, S228, N229, and S271. Positions 227, 228, 229, and 271 each coordinate dimethylallyl diphosphate. Residues S227, S228, N229, and S271 each contribute to the isopentenyl diphosphate site.

The protein belongs to the IspH family. [4Fe-4S] cluster serves as cofactor.

The enzyme catalyses isopentenyl diphosphate + 2 oxidized [2Fe-2S]-[ferredoxin] + H2O = (2E)-4-hydroxy-3-methylbut-2-enyl diphosphate + 2 reduced [2Fe-2S]-[ferredoxin] + 2 H(+). It carries out the reaction dimethylallyl diphosphate + 2 oxidized [2Fe-2S]-[ferredoxin] + H2O = (2E)-4-hydroxy-3-methylbut-2-enyl diphosphate + 2 reduced [2Fe-2S]-[ferredoxin] + 2 H(+). Its pathway is isoprenoid biosynthesis; dimethylallyl diphosphate biosynthesis; dimethylallyl diphosphate from (2E)-4-hydroxy-3-methylbutenyl diphosphate: step 1/1. It participates in isoprenoid biosynthesis; isopentenyl diphosphate biosynthesis via DXP pathway; isopentenyl diphosphate from 1-deoxy-D-xylulose 5-phosphate: step 6/6. Its function is as follows. Catalyzes the conversion of 1-hydroxy-2-methyl-2-(E)-butenyl 4-diphosphate (HMBPP) into a mixture of isopentenyl diphosphate (IPP) and dimethylallyl diphosphate (DMAPP). Acts in the terminal step of the DOXP/MEP pathway for isoprenoid precursor biosynthesis. In Xylella fastidiosa (strain M12), this protein is 4-hydroxy-3-methylbut-2-enyl diphosphate reductase.